We begin with the raw amino-acid sequence, 309 residues long: G-protein coupled receptor 35 (309 aa).

Topologically, residues 1–24 (MNGTYNTCGSSDLTWPPAIKLGFY) are extracellular. Asparagine 2 is a glycosylation site (N-linked (GlcNAc...) asparagine). Residues 25–45 (AYLGVLLVLGLLLNSLALWVF) form a helical membrane-spanning segment. At 46–56 (CCRMQQWTETR) the chain is on the cytoplasmic side. The chain crosses the membrane as a helical span at residues 57-77 (IYMTNLAVADLCLLCTLPFVL). Over 78–90 (HSLRDTSDTPLCQ) the chain is Extracellular. Residues cysteine 89 and cysteine 162 are joined by a disulfide bond. The helical transmembrane segment at 91–112 (LSQGIYLTNRYMSISLVTAIAV) threads the bilayer. Topologically, residues 113–135 (DRYVAVRHPLRARGLRSPRQAAA) are cytoplasmic. A helical transmembrane segment spans residues 136-156 (VCAVLWVLVIGSLVARWLLGI). Residues 157 to 174 (QEGGFCFRSTRHNFNSMA) are Extracellular-facing. The chain crosses the membrane as a helical span at residues 175 to 195 (FPLLGFYLPLAVVVFCSLKVV). Over 196 to 218 (TALAQRPPTDVGQAEATRKAARM) the chain is Cytoplasmic. The helical transmembrane segment at 219 to 239 (VWANLLVFVVCFLPLHVGLTV) threads the bilayer. The Extracellular portion of the chain corresponds to 240–258 (RLAVGWNACALLETIRRAL). Residues 259-279 (YITSKLSDANCCLDAICYYYM) traverse the membrane as a helical segment. The Cytoplasmic portion of the chain corresponds to 280–309 (AKEFQEASALAVAPSAKAHKSQDSLCVTLA). Phosphoserine is present on residues serine 287 and serine 294. 2 positions are modified to phosphoserine; by GRK5 and GRK6: serine 300 and serine 303. Threonine 307 is subject to Phosphothreonine.

It belongs to the G-protein coupled receptor 1 family. As to quaternary structure, interacts with GNA13. Interacts with ARRB2. Post-translationally, multiply phosphorylated in clusters of serines and threonines in the C-terminal tail. Phosphorylation of Ser-300 and Ser-303 is mediated by GRK5 and/or GRK6. As to expression, predominantly expressed in immune and gastrointestinal tissues.

It localises to the cell membrane. G-protein coupled receptor that binds to several ligands including the tryptophan metabolite kynurenic acid (KYNA), lysophosphatidic acid (LPA) or 5-hydroxyindoleacetic acid (5-HIAA) with high affinity, leading to rapid and transient activation of numerous intracellular signaling pathways. Plays a role in neutrophil recruitment to sites of inflammation and bacterial clearance through the major serotonin metabolite 5-HIAA that acts as a physiological ligand. Stimulates lipid metabolism, thermogenic, and anti-inflammatory gene expression in adipose tissue once activated by kynurenic acid. In macrophages, activation by lysophosphatidic acid promotes GPR35-induced signaling with a distinct transcriptional profile characterized by TNF production associated with ERK and NF-kappa-B activation. In turn, induces chemotaxis of macrophages. The chain is G-protein coupled receptor 35 (GPR35) from Homo sapiens (Human).